The primary structure comprises 834 residues: Taste receptor type 1 member 2 (834 aa).

An N-terminal signal peptide occupies residues 1–19; that stretch reads MGPRARTVCFLFFLLWVLA. Residues 20–561 are Extracellular-facing; the sequence is ELAENSDFHL…SFLEWHEAAT (542 aa). 7 N-linked (GlcNAc...) asparagine glycosylation sites follow: Asn-84, Asn-292, Asn-312, Asn-363, Asn-423, Asn-482, and Asn-522. Residues 562-582 form a helical membrane-spanning segment; that stretch reads IAVALLAALGFLXXXXXXXXX. The Cytoplasmic portion of the chain corresponds to 583–597; sequence XXXXXXPMVRSAGGP. A helical transmembrane segment spans residues 598–618; sequence MCFLMLTLLLVAYMVVPVYVG. Topologically, residues 619 to 630 are extracellular; it reads PPKVTTCLCRQA. The chain crosses the membrane as a helical span at residues 631–651; it reads LFPVCFTICISCITMRSFQIV. At 652–676 the chain is on the cytoplasmic side; it reads CVFKMASRFPRAYSYWVRYQGSYVS. The helical transmembrane segment at 677–697 threads the bilayer; it reads VAFITALKVVTVVISLLATGL. Over 698–722 the chain is Extracellular; it reads NPTTRADTDDPKIMIISCNPNYRNS. The helical transmembrane segment at 723 to 743 threads the bilayer; sequence LLFNTSLDLLLSVVGFSFAYM. At 744 to 755 the chain is on the cytoplasmic side; it reads GKELPTNYNEAK. Residues 756-776 form a helical membrane-spanning segment; that stretch reads FITFSMTFYFTSSVSLCTFMS. Residues 777–779 are Extracellular-facing; it reads VYD. The chain crosses the membrane as a helical span at residues 780 to 800; sequence GVLVTIVDLLVTVFNLLAISL. Residues 801 to 834 are Cytoplasmic-facing; that stretch reads GYFGPKCYMILFYPERNTPAYFNSMIQGYTMRRD.

It belongs to the G-protein coupled receptor 3 family. TAS1R subfamily. As to quaternary structure, forms heterodimers with TAS1R3.

Its subcellular location is the cell membrane. In terms of biological role, putative taste receptor. TAS1R2/TAS1R3 recognizes diverse natural and synthetic sweeteners. This chain is Taste receptor type 1 member 2 (TAS1R2), found in Cebuella pygmaea (Pygmy marmoset).